The following is a 416-amino-acid chain: Gamma-glutamyl phosphate reductase (416 aa).

It belongs to the gamma-glutamyl phosphate reductase family.

It is found in the cytoplasm. It catalyses the reaction L-glutamate 5-semialdehyde + phosphate + NADP(+) = L-glutamyl 5-phosphate + NADPH + H(+). It functions in the pathway amino-acid biosynthesis; L-proline biosynthesis; L-glutamate 5-semialdehyde from L-glutamate: step 2/2. In terms of biological role, catalyzes the NADPH-dependent reduction of L-glutamate 5-phosphate into L-glutamate 5-semialdehyde and phosphate. The product spontaneously undergoes cyclization to form 1-pyrroline-5-carboxylate. The protein is Gamma-glutamyl phosphate reductase of Salmonella arizonae (strain ATCC BAA-731 / CDC346-86 / RSK2980).